A 136-amino-acid chain; its full sequence is Large ribosomal subunit protein eL27 (136 aa).

Residues 5-40 form the KOW domain; it reads MKPGKVVMVLAGRYAGRKAVIVKNIDDGTADRPYSH.

It belongs to the eukaryotic ribosomal protein eL27 family. As to quaternary structure, component of the large ribosomal subunit.

It is found in the cytoplasm. It localises to the cytosol. The protein resides in the rough endoplasmic reticulum. Functionally, component of the large ribosomal subunit. The protein is Large ribosomal subunit protein eL27 (rpl27) of Hippocampus comes (Tiger tail seahorse).